The sequence spans 1440 residues: Gag-Pol polyprotein (1440 aa).

A lipid anchor (N-myristoyl glycine; by host) is attached at G2. Residues 7–31 (VLSGGKLDAWEKIRLRPGGKKKYRL) form an interaction with Gp41 region. The interval 8–43 (LSGGKLDAWEKIRLRPGGKKKYRLKHLVWASRELER) is interaction with host CALM1. Positions 12-19 (KLDAWEKI) are interaction with host AP3D1. The interaction with membrane phosphatidylinositol 4,5-bisphosphate and RNA stretch occupies residues 14–33 (DAWEKIRLRPGGKKKYRLKH). Positions 16–22 (WEKIRLR) match the Nuclear export signal motif. Positions 26–32 (KKKYRLK) match the Nuclear localization signal motif. The interval 73–77 (EEIKS) is interaction with membrane phosphatidylinositol 4,5-bisphosphate. Y138 carries the phosphotyrosine; by host modification. Positions 195–233 (NIVGGHQAAMQMLKDTINEEAADWDRVHPVHAGPIPPGQ) are interaction with human PPIA/CYPA and NUP153. The dimerization/Multimerization of capsid protein p24 stretch occupies residues 283-369 (YSPVSILDIR…GGPSHKARVL (87 aa)). CCHC-type zinc fingers lie at residues 396–413 (IKCFNCGKEGHLARNCRA) and 417–434 (KGCWKCGKEGHQMKDCTE). The interval 494–498 (PQITL) is dimerization of protease. The Peptidase A2 domain occupies 513-582 (KEALLDTGAD…TPVNIIGRNM (70 aa)). Catalysis depends on D518, which acts as the For protease activity; shared with dimeric partner. Dimerization of protease stretches follow at residues 542–548 (GIGGFIK) and 581–593 (NMLTQIGCTLNFP). One can recognise a Reverse transcriptase domain in the interval 636-826 (EGKILKIGPE…PPFLWMGYEL (191 aa)). Mg(2+)-binding residues include D702, D777, and D778. Residues 819-827 (FLWMGYELH) are RT 'primer grip'. The Tryptophan repeat motif signature appears at 990-1006 (WEAWWTEYWQATWIPEW). Residues 1026-1149 (IVGAETFYVD…VDKLVSSGIR (124 aa)) enclose the RNase H type-1 domain. Positions 1035, 1070, 1090, and 1141 each coordinate Mg(2+). The Integrase-type zinc-finger motif lies at 1155–1196 (DGIDKAQEEHEKYHSNWRAMASDFNLPPIVAKEIVASCDKCQ). Residues H1164, H1168, C1192, and C1195 each coordinate Zn(2+). The Integrase catalytic domain occupies 1206 to 1356 (VDCSPGIWQL…SAGERIIDMI (151 aa)). Positions 1216, 1268, and 1304 each coordinate Mg(2+). The integrase-type DNA-binding region spans 1375–1422 (FRVYYRDNRDPIWKGPAKLLWKGEGAVVIQDNSDIKVVPRRKAKIIRD).

As to quaternary structure, homotrimer; further assembles as hexamers of trimers. Interacts with gp41 (via C-terminus). Interacts with host CALM1; this interaction induces a conformational change in the Matrix protein, triggering exposure of the myristate group. Interacts with host AP3D1; this interaction allows the polyprotein trafficking to multivesicular bodies during virus assembly. Part of the pre-integration complex (PIC) which is composed of viral genome, matrix protein, Vpr and integrase. In terms of assembly, homodimer; the homodimer further multimerizes as homohexamers or homopentamers. Interacts with human PPIA/CYPA; This interaction stabilizes the capsid. Interacts with human NUP153. Interacts with host PDZD8; this interaction stabilizes the capsid. Interacts with monkey TRIM5; this interaction destabilizes the capsid. Homodimer, whose active site consists of two apposed aspartic acid residues. As to quaternary structure, heterodimer of p66 RT and p51 RT (RT p66/p51). Heterodimerization of RT is essential for DNA polymerase activity. The overall folding of the subdomains is similar in p66 RT and p51 RT but the spatial arrangements of the subdomains are dramatically different. In terms of assembly, homotetramer; may further associate as a homohexadecamer. Part of the pre-integration complex (PIC) which is composed of viral genome, matrix protein, Vpr and integrase. Interacts with human SMARCB1/INI1 and human PSIP1/LEDGF isoform 1. Interacts with human KPNA3; this interaction might play a role in nuclear import of the pre-integration complex. Interacts with human NUP153; this interaction might play a role in nuclear import of the pre-integration complex. Mg(2+) is required as a cofactor. Post-translationally, specific enzymatic cleavages by the viral protease yield mature proteins. The protease is released by autocatalytic cleavage. The polyprotein is cleaved during and after budding, this process is termed maturation. Proteolytic cleavage of p66 RT removes the RNase H domain to yield the p51 RT subunit. Nucleocapsid protein p7 might be further cleaved after virus entry. Tyrosine phosphorylated presumably in the virion by a host kinase. Phosphorylation is apparently not a major regulator of membrane association. In terms of processing, phosphorylated possibly by host MAPK1; this phosphorylation is necessary for Pin1-mediated virion uncoating. Post-translationally, methylated by host PRMT6, impairing its function by reducing RNA annealing and the initiation of reverse transcription.

It localises to the host cell membrane. Its subcellular location is the host endosome. The protein localises to the host multivesicular body. The protein resides in the virion membrane. It is found in the host nucleus. It localises to the host cytoplasm. Its subcellular location is the virion. The catalysed reaction is Specific for a P1 residue that is hydrophobic, and P1' variable, but often Pro.. The enzyme catalyses Endohydrolysis of RNA in RNA/DNA hybrids. Three different cleavage modes: 1. sequence-specific internal cleavage of RNA. Human immunodeficiency virus type 1 and Moloney murine leukemia virus enzymes prefer to cleave the RNA strand one nucleotide away from the RNA-DNA junction. 2. RNA 5'-end directed cleavage 13-19 nucleotides from the RNA end. 3. DNA 3'-end directed cleavage 15-20 nucleotides away from the primer terminus.. It carries out the reaction 3'-end directed exonucleolytic cleavage of viral RNA-DNA hybrid.. It catalyses the reaction DNA(n) + a 2'-deoxyribonucleoside 5'-triphosphate = DNA(n+1) + diphosphate. With respect to regulation, protease: The viral protease is inhibited by many synthetic protease inhibitors (PIs), such as amprenavir, atazanavir, indinavir, loprinavir, nelfinavir, ritonavir and saquinavir. Use of protease inhibitors in tritherapy regimens permit more ambitious therapeutic strategies. Reverse transcriptase/ribonuclease H: RT can be inhibited either by nucleoside RT inhibitors (NRTIs) or by non nucleoside RT inhibitors (NNRTIs). NRTIs act as chain terminators, whereas NNRTIs inhibit DNA polymerization by binding a small hydrophobic pocket near the RT active site and inducing an allosteric change in this region. Classical NRTIs are abacavir, adefovir (PMEA), didanosine (ddI), lamivudine (3TC), stavudine (d4T), tenofovir (PMPA), zalcitabine (ddC), and zidovudine (AZT). Classical NNRTIs are atevirdine (BHAP U-87201E), delavirdine, efavirenz (DMP-266), emivirine (I-EBU), and nevirapine (BI-RG-587). The tritherapies used as a basic effective treatment of AIDS associate two NRTIs and one NNRTI. Functionally, mediates, with Gag polyprotein, the essential events in virion assembly, including binding the plasma membrane, making the protein-protein interactions necessary to create spherical particles, recruiting the viral Env proteins, and packaging the genomic RNA via direct interactions with the RNA packaging sequence (Psi). Gag-Pol polyprotein may regulate its own translation, by the binding genomic RNA in the 5'-UTR. At low concentration, the polyprotein would promote translation, whereas at high concentration, the polyprotein would encapsidate genomic RNA and then shut off translation. Targets the polyprotein to the plasma membrane via a multipartite membrane-binding signal, that includes its myristoylated N-terminus. Matrix protein is part of the pre-integration complex. Implicated in the release from host cell mediated by Vpu. Binds to RNA. Its function is as follows. Forms the conical core that encapsulates the genomic RNA-nucleocapsid complex in the virion. Most core are conical, with only 7% tubular. The core is constituted by capsid protein hexamer subunits. The core is disassembled soon after virion entry. Host restriction factors such as TRIM5-alpha or TRIMCyp bind retroviral capsids and cause premature capsid disassembly, leading to blocks in reverse transcription. Capsid restriction by TRIM5 is one of the factors which restricts HIV-1 to the human species. Host PIN1 apparently facilitates the virion uncoating. On the other hand, interactions with PDZD8 or CYPA stabilize the capsid. In terms of biological role, encapsulates and protects viral dimeric unspliced genomic RNA (gRNA). Binds these RNAs through its zinc fingers. Acts as a nucleic acid chaperone which is involved in rearangement of nucleic acid secondary structure during gRNA retrotranscription. Also facilitates template switch leading to recombination. As part of the polyprotein, participates in gRNA dimerization, packaging, tRNA incorporation and virion assembly. Functionally, aspartyl protease that mediates proteolytic cleavages of Gag and Gag-Pol polyproteins during or shortly after the release of the virion from the plasma membrane. Cleavages take place as an ordered, step-wise cascade to yield mature proteins. This process is called maturation. Displays maximal activity during the budding process just prior to particle release from the cell. Also cleaves Nef and Vif, probably concomitantly with viral structural proteins on maturation of virus particles. Hydrolyzes host EIF4GI and PABP1 in order to shut off the capped cellular mRNA translation. The resulting inhibition of cellular protein synthesis serves to ensure maximal viral gene expression and to evade host immune response. Also mediates cleavage of host YTHDF3. Mediates cleavage of host CARD8, thereby activating the CARD8 inflammasome, leading to the clearance of latent HIV-1 in patient CD4(+) T-cells after viral reactivation; in contrast, HIV-1 can evade CARD8-sensing when its protease remains inactive in infected cells prior to viral budding. Multifunctional enzyme that converts the viral RNA genome into dsDNA in the cytoplasm, shortly after virus entry into the cell. This enzyme displays a DNA polymerase activity that can copy either DNA or RNA templates, and a ribonuclease H (RNase H) activity that cleaves the RNA strand of RNA-DNA heteroduplexes in a partially processive 3' to 5' endonucleasic mode. Conversion of viral genomic RNA into dsDNA requires many steps. A tRNA(3)-Lys binds to the primer-binding site (PBS) situated at the 5'-end of the viral RNA. RT uses the 3' end of the tRNA primer to perform a short round of RNA-dependent minus-strand DNA synthesis. The reading proceeds through the U5 region and ends after the repeated (R) region which is present at both ends of viral RNA. The portion of the RNA-DNA heteroduplex is digested by the RNase H, resulting in a ssDNA product attached to the tRNA primer. This ssDNA/tRNA hybridizes with the identical R region situated at the 3' end of viral RNA. This template exchange, known as minus-strand DNA strong stop transfer, can be either intra- or intermolecular. RT uses the 3' end of this newly synthesized short ssDNA to perform the RNA-dependent minus-strand DNA synthesis of the whole template. RNase H digests the RNA template except for two polypurine tracts (PPTs) situated at the 5'-end and near the center of the genome. It is not clear if both polymerase and RNase H activities are simultaneous. RNase H probably can proceed both in a polymerase-dependent (RNA cut into small fragments by the same RT performing DNA synthesis) and a polymerase-independent mode (cleavage of remaining RNA fragments by free RTs). Secondly, RT performs DNA-directed plus-strand DNA synthesis using the PPTs that have not been removed by RNase H as primers. PPTs and tRNA primers are then removed by RNase H. The 3' and 5' ssDNA PBS regions hybridize to form a circular dsDNA intermediate. Strand displacement synthesis by RT to the PBS and PPT ends produces a blunt ended, linear dsDNA copy of the viral genome that includes long terminal repeats (LTRs) at both ends. Its function is as follows. Catalyzes viral DNA integration into the host chromosome, by performing a series of DNA cutting and joining reactions. This enzyme activity takes place after virion entry into a cell and reverse transcription of the RNA genome in dsDNA. The first step in the integration process is 3' processing. This step requires a complex comprising the viral genome, matrix protein, Vpr and integrase. This complex is called the pre-integration complex (PIC). The integrase protein removes 2 nucleotides from each 3' end of the viral DNA, leaving recessed CA OH's at the 3' ends. In the second step, the PIC enters cell nucleus. This process is mediated through integrase and Vpr proteins, and allows the virus to infect a non dividing cell. This ability to enter the nucleus is specific of lentiviruses, other retroviruses cannot and rely on cell division to access cell chromosomes. In the third step, termed strand transfer, the integrase protein joins the previously processed 3' ends to the 5' ends of strands of target cellular DNA at the site of integration. The 5'-ends are produced by integrase-catalyzed staggered cuts, 5 bp apart. A Y-shaped, gapped, recombination intermediate results, with the 5'-ends of the viral DNA strands and the 3' ends of target DNA strands remaining unjoined, flanking a gap of 5 bp. The last step is viral DNA integration into host chromosome. This involves host DNA repair synthesis in which the 5 bp gaps between the unjoined strands are filled in and then ligated. Since this process occurs at both cuts flanking the HIV genome, a 5 bp duplication of host DNA is produced at the ends of HIV-1 integration. Alternatively, Integrase may catalyze the excision of viral DNA just after strand transfer, this is termed disintegration. This Human immunodeficiency virus type 1 group M subtype A (isolate MAL) (HIV-1) protein is Gag-Pol polyprotein (gag-pol).